Here is a 179-residue protein sequence, read N- to C-terminus: MVALYDYYKNSISKKLMLNFNYSSVMQVPKIDKITLNIGVGIATIDKKNLDFAISDLTKISGQKPLITKARKSIASFKIRKGYPIGCKVTLRGNRKWDFFERLIFIVIPRIRDFRGFSNKSFDGKGNYSIGIKEQIIFPEIDFDKIDRIRGINITITTTALSDREGYALLSAFNFPFRT.

Belongs to the universal ribosomal protein uL5 family. Part of the 50S ribosomal subunit; part of the 5S rRNA/L5/L18/L25 subcomplex. Contacts the 5S rRNA and the P site tRNA. Forms a bridge to the 30S subunit in the 70S ribosome.

This is one of the proteins that bind and probably mediate the attachment of the 5S RNA into the large ribosomal subunit, where it forms part of the central protuberance. In the 70S ribosome it contacts protein S13 of the 30S subunit (bridge B1b), connecting the 2 subunits; this bridge is implicated in subunit movement. Contacts the P site tRNA; the 5S rRNA and some of its associated proteins might help stabilize positioning of ribosome-bound tRNAs. This Buchnera aphidicola subsp. Baizongia pistaciae (strain Bp) protein is Large ribosomal subunit protein uL5.